The primary structure comprises 212 residues: Pyrrolidone-carboxylate peptidase (212 aa).

Catalysis depends on residues glutamate 78, cysteine 141, and histidine 165.

It belongs to the peptidase C15 family. Homotetramer.

Its subcellular location is the cytoplasm. The enzyme catalyses Release of an N-terminal pyroglutamyl group from a polypeptide, the second amino acid generally not being Pro.. Removes 5-oxoproline from various penultimate amino acid residues except L-proline. This is Pyrrolidone-carboxylate peptidase from Staphylococcus aureus (strain Mu3 / ATCC 700698).